Consider the following 634-residue polypeptide: Carbon monoxide dehydrogenase 2 (634 aa).

[4Fe-4S] cluster contacts are provided by Cys-44, Cys-53, Cys-56, Cys-61, and Cys-73. [Ni-4Fe-5S] cluster-binding residues include His-264, Cys-343, Cys-453, Cys-484, and Cys-525.

It belongs to the Ni-containing carbon monoxide dehydrogenase family. In terms of assembly, homodimer. It depends on [4Fe-4S] cluster as a cofactor. The cofactor is [Ni-4Fe-5S] cluster.

The catalysed reaction is CO + 2 oxidized [2Fe-2S]-[ferredoxin] + H2O = 2 reduced [2Fe-2S]-[ferredoxin] + CO2 + 2 H(+). Functionally, CODH oxidizes carbon monoxide coupled, via CooF, to the reduction of a hydrogen cation by a hydrogenase (possibly CooH). This Methanosarcina mazei (strain ATCC BAA-159 / DSM 3647 / Goe1 / Go1 / JCM 11833 / OCM 88) (Methanosarcina frisia) protein is Carbon monoxide dehydrogenase 2 (cooS2).